The sequence spans 320 residues: GTPase Era (320 aa).

Residues 25–193 enclose the Era-type G domain; it reads HCGFIAIVGR…RKHVRDHLPK (169 aa). The segment at 33–40 is G1; the sequence is GRPNVGKS. A GTP-binding site is contributed by 33–40; the sequence is GRPNVGKS. Residues 59 to 63 are G2; the sequence is QTTRH. A G3 region spans residues 80 to 83; it reads DTPG. Residues 80–84 and 142–145 each bind GTP; these read DTPGL and NKVD. Positions 142-145 are G4; it reads NKVD. A G5 region spans residues 172–174; that stretch reads ISA. A KH type-2 domain is found at 216 to 302; the sequence is VREKLMRFTG…YLETWVKVKS (87 aa).

The protein belongs to the TRAFAC class TrmE-Era-EngA-EngB-Septin-like GTPase superfamily. Era GTPase family. Monomer.

It localises to the cytoplasm. It is found in the cell inner membrane. Its function is as follows. An essential GTPase that binds both GDP and GTP, with rapid nucleotide exchange. Plays a role in 16S rRNA processing and 30S ribosomal subunit biogenesis and possibly also in cell cycle regulation and energy metabolism. This chain is GTPase Era, found in Vibrio vulnificus (strain CMCP6).